We begin with the raw amino-acid sequence, 592 residues long: A-type ATP synthase subunit A (592 aa).

An ATP-binding site is contributed by 234–241 (GAFGTGKT).

This sequence belongs to the ATPase alpha/beta chains family. In terms of assembly, has multiple subunits with at least A(3), B(3), C, D, E, F, H, I and proteolipid K(x).

Its subcellular location is the cell membrane. The enzyme catalyses ATP + H2O + 4 H(+)(in) = ADP + phosphate + 5 H(+)(out). In terms of biological role, component of the A-type ATP synthase that produces ATP from ADP in the presence of a proton gradient across the membrane. The A chain is the catalytic subunit. The protein is A-type ATP synthase subunit A of Nitrosopumilus maritimus (strain SCM1).